A 301-amino-acid polypeptide reads, in one-letter code: Probable alpha-L-glutamate ligase (301 aa).

In terms of domain architecture, ATP-grasp spans 104–287 (LQLLSRRGIG…VAGMIIEHLE (184 aa)). Residues lysine 141, 178 to 179 (EY), aspartate 187, and 211 to 213 (RSN) each bind ATP. 3 residues coordinate Mg(2+): aspartate 248, glutamate 260, and asparagine 262. 3 residues coordinate Mn(2+): aspartate 248, glutamate 260, and asparagine 262.

It belongs to the RimK family. Mg(2+) serves as cofactor. The cofactor is Mn(2+).

In Pseudomonas putida (strain GB-1), this protein is Probable alpha-L-glutamate ligase.